A 556-amino-acid chain; its full sequence is Formate--tetrahydrofolate ligase (556 aa).

65 to 72 is an ATP binding site; sequence TPAGEGKS.

Belongs to the formate--tetrahydrofolate ligase family.

It carries out the reaction (6S)-5,6,7,8-tetrahydrofolate + formate + ATP = (6R)-10-formyltetrahydrofolate + ADP + phosphate. It participates in one-carbon metabolism; tetrahydrofolate interconversion. The chain is Formate--tetrahydrofolate ligase from Clostridium beijerinckii (strain ATCC 51743 / NCIMB 8052) (Clostridium acetobutylicum).